Consider the following 338-residue polypeptide: MIEIEKVCVDFTAGRGTPTRAVDDVSLHIAAGEIFGIVGTSGAGKSTLLRTLNALTRPSQGRVNVNGVEISALDGKALRQARQRIGMIFQHFNLMHTRTVAKNVAFSLKAAGWERSKIAPRVAEILTLVGLADKANCFPVQLSGGQKQRVGIARAIANHPDVLLCDEPTSALDLETSATILALLRQINAQLGITIVLITHEMNVIKSICDRVAVMSGGKVVESGEVFDVFAHPQHAFTQQLVSHTLNLTLPERLREHLPGQLLKILFIGDSAEQPVLSEVAIKFGVAVNILHGKIEYIGERALGILVVQLTAPHNPTAVAAAVEHIRQRTAQVEVIRG.

The 241-residue stretch at 2-242 (IEIEKVCVDF…PQHAFTQQLV (241 aa)) folds into the ABC transporter domain. 39 to 46 (GTSGAGKS) is an ATP binding site.

The protein belongs to the ABC transporter superfamily. Methionine importer (TC 3.A.1.24) family. As to quaternary structure, the complex is composed of two ATP-binding proteins (MetN), two transmembrane proteins (MetI) and a solute-binding protein (MetQ).

Its subcellular location is the cell inner membrane. The catalysed reaction is L-methionine(out) + ATP + H2O = L-methionine(in) + ADP + phosphate + H(+). It carries out the reaction D-methionine(out) + ATP + H2O = D-methionine(in) + ADP + phosphate + H(+). In terms of biological role, part of the ABC transporter complex MetNIQ involved in methionine import. Responsible for energy coupling to the transport system. The protein is Methionine import ATP-binding protein MetN 2 of Salmonella typhi.